The sequence spans 277 residues: uncharacterized protein (277 aa).

A signal peptide spans 1 to 25 (MNKKSIWSKTAFGSLFLLLGTAFTA). Cysteine 26 carries the N-palmitoyl cysteine lipid modification. Cysteine 26 is lipidated: S-diacylglycerol cysteine.

Belongs to the MG439/MG440 family.

The protein resides in the cell membrane. This is an uncharacterized protein from Mycoplasma pneumoniae (strain ATCC 29342 / M129 / Subtype 1) (Mycoplasmoides pneumoniae).